The primary structure comprises 308 residues: MRILLIAGGWSEERDVSLSGARGIHAALERLGHQVTLFDPCRTLAGLLEAAQAHDFAFLNLHGQPGEDGLVQALLETAGVPYQGSGPAGSFLALNKAAAKEVFVRNGLPTPEWVFLPAHPGADWEPPFAFPAFIKSNNGGSSLALHRVSCPGELARALDELFTRGGEAIIEPAVEGVEVTCGVLGDEALPPILIRPLGAGFFDYASKYTPGQAEELCPAPLPGEVTAKVREYALRAHRALGLRGYSRSDFILTPAGALSLLEVNTLPGMTATSLLPQEAAAVGISFDGLIGRLIELGLAAHGKQQEKA.

In terms of domain architecture, ATP-grasp spans 100-295 (KEVFVRNGLP…FDGLIGRLIE (196 aa)). ATP is bound at residue 127-180 (PFAFPAFIKSNNGGSSLALHRVSCPGELARALDELFTRGGEAIIEPAVEGVEVT). 3 residues coordinate Mg(2+): aspartate 249, glutamate 262, and asparagine 264.

The protein belongs to the D-alanine--D-alanine ligase family. It depends on Mg(2+) as a cofactor. The cofactor is Mn(2+).

The protein localises to the cytoplasm. It catalyses the reaction 2 D-alanine + ATP = D-alanyl-D-alanine + ADP + phosphate + H(+). The protein operates within cell wall biogenesis; peptidoglycan biosynthesis. Its function is as follows. Cell wall formation. This Oleidesulfovibrio alaskensis (strain ATCC BAA-1058 / DSM 17464 / G20) (Desulfovibrio alaskensis) protein is D-alanine--D-alanine ligase.